Here is a 115-residue protein sequence, read N- to C-terminus: Nascent polypeptide-associated complex protein (115 aa).

The NAC-A/B domain occupies 6 to 72; the sequence is PMNPKQLKKL…SEEEKAIINI (67 aa).

Belongs to the NAC-alpha family. Homodimer. Interacts with the ribosome. Binds ribosomal RNA.

Functionally, contacts the emerging nascent chain on the ribosome. In Pyrococcus horikoshii (strain ATCC 700860 / DSM 12428 / JCM 9974 / NBRC 100139 / OT-3), this protein is Nascent polypeptide-associated complex protein.